The primary structure comprises 473 residues: Photosystem II CP43 reaction center protein (473 aa).

Positions 1-14 are excised as a propeptide; the sequence is MKTLYSPRRFYPVE. An N-acetylthreonine modification is found at Thr-15. Phosphothreonine is present on Thr-15. A run of 5 helical transmembrane segments spans residues 69-93, 134-155, 178-200, 255-275, and 291-312; these read LFEVAHFVPEKPMYEQGLILLPHLA, LLGPETLEESFPFFGYVWKDRN, KALYFGGVYDTWAPGGGDVRKIS, KPFAWARRALVWSGEAYLSYS, and WFNNTAYPSEFYGPTGPEASQA. Glu-367 serves as a coordination point for [CaMn4O5] cluster. Residues 447–471 form a helical membrane-spanning segment; the sequence is RARAAAAGFEKGIDRDLEPVLFMTP.

Belongs to the PsbB/PsbC family. PsbC subfamily. PSII is composed of 1 copy each of membrane proteins PsbA, PsbB, PsbC, PsbD, PsbE, PsbF, PsbH, PsbI, PsbJ, PsbK, PsbL, PsbM, PsbT, PsbX, PsbY, PsbZ, Psb30/Ycf12, at least 3 peripheral proteins of the oxygen-evolving complex and a large number of cofactors. It forms dimeric complexes. It depends on Binds multiple chlorophylls and provides some of the ligands for the Ca-4Mn-5O cluster of the oxygen-evolving complex. It may also provide a ligand for a Cl- that is required for oxygen evolution. PSII binds additional chlorophylls, carotenoids and specific lipids. as a cofactor.

It is found in the plastid. It localises to the chloroplast thylakoid membrane. Functionally, one of the components of the core complex of photosystem II (PSII). It binds chlorophyll and helps catalyze the primary light-induced photochemical processes of PSII. PSII is a light-driven water:plastoquinone oxidoreductase, using light energy to abstract electrons from H(2)O, generating O(2) and a proton gradient subsequently used for ATP formation. This chain is Photosystem II CP43 reaction center protein, found in Ranunculus macranthus (Large buttercup).